A 682-amino-acid chain; its full sequence is Putative L-type lectin-domain containing receptor kinase I.1 (682 aa).

The signal sequence occupies residues 1–19; it reads MAQRLHLLLLLFLICFVNL. At 20 to 292 the chain is on the extracellular side; the sequence is ISFSSQQDLS…RPKKPEKTSP (273 aa). Residues 27–264 are legume-lectin like; the sequence is DLSFIYNGFN…YQYILGWSFS (238 aa). N-linked (GlcNAc...) asparagine glycans are attached at residues asparagine 60, asparagine 130, asparagine 187, asparagine 210, and asparagine 231. A helical membrane pass occupies residues 293-313; sequence LLIVLLIILAIIVMVVVGGFY. Over 314-682 the chain is Cytoplasmic; the sequence is LYRRKKYAEV…SHTIIYGDGR (369 aa). The region spanning 348 to 622 is the Protein kinase domain; that stretch reads FNKDGRLGRG…VQYINRHQRL (275 aa). ATP contacts are provided by residues 354–362 and lysine 376; that span reads LGRGGFGEV. Aspartate 472 (proton acceptor) is an active-site residue.

It in the C-terminal section; belongs to the protein kinase superfamily. Ser/Thr protein kinase family. The protein in the N-terminal section; belongs to the leguminous lectin family.

The protein resides in the cell membrane. The enzyme catalyses L-seryl-[protein] + ATP = O-phospho-L-seryl-[protein] + ADP + H(+). It carries out the reaction L-threonyl-[protein] + ATP = O-phospho-L-threonyl-[protein] + ADP + H(+). Functionally, involved in resistance response to the pathogenic fungus Alternaria brassicicola. The protein is Putative L-type lectin-domain containing receptor kinase I.1 of Arabidopsis thaliana (Mouse-ear cress).